Here is a 618-residue protein sequence, read N- to C-terminus: Mitochondrial Rho GTPase 2 (618 aa).

Over 1 to 591 the chain is Cytoplasmic; the sequence is MKRDVRILLL…LNAVELGAAS (591 aa). The region spanning 2 to 168 is the Miro 1 domain; sequence KRDVRILLLG…FYYAQKAVLH (167 aa). GTP is bound by residues Gly-16, Lys-17, Thr-18, and Ser-19. Thr-18 serves as a coordination point for Mg(2+). Mg(2+)-binding residues include Pro-35 and Asp-57. GTP-binding residues include Ser-59, Asn-118, Lys-119, Asp-121, Ala-149, and Lys-150. 2 EF-hand domains span residues 184 to 219 and 304 to 339; these read ACSR…CFGN and LGYQ…FPCM. Asp-197, Asp-199, Asn-201, Glu-208, Asp-317, Asp-319, Asp-321, and Glu-328 together coordinate Ca(2+). One can recognise a Miro 2 domain in the interval 416–579; it reads RNVFLCKVLG…YTKLATAATF (164 aa). Gly-428, Gly-430, Lys-431, Ser-432, and Ala-433 together coordinate GTP. Position 432 (Ser-432) interacts with Mg(2+). Glu-474 contacts Mg(2+). Lys-528, Asp-530, and Cys-559 together coordinate GTP. The helical; Anchor for type IV membrane protein transmembrane segment at 592 to 614 threads the bilayer; the sequence is FWLRVALGAAVTALVGFTLYRVL. Topologically, residues 615-618 are mitochondrial intermembrane; it reads AKNK.

It belongs to the mitochondrial Rho GTPase family. As to quaternary structure, homodimer.

It localises to the mitochondrion outer membrane. It catalyses the reaction GTP + H2O = GDP + phosphate + H(+). The enzyme catalyses ATP + H2O = ADP + phosphate + H(+). It carries out the reaction UTP + H2O = UDP + phosphate + H(+). In terms of biological role, atypical mitochondrial nucleoside-triphosphatase (NTPase) involved in mitochondrial trafficking. Probably involved in control of anterograde transport of mitochondria and their subcellular distribution. Can hydrolyze GTP, ATP and UTP. This chain is Mitochondrial Rho GTPase 2 (RHOT2), found in Gallus gallus (Chicken).